Here is a 284-residue protein sequence, read N- to C-terminus: Bifunctional protein FolD (284 aa).

Residues Gly164–Ser166 and Ser189 each bind NADP(+).

Belongs to the tetrahydrofolate dehydrogenase/cyclohydrolase family. Homodimer.

It catalyses the reaction (6R)-5,10-methylene-5,6,7,8-tetrahydrofolate + NADP(+) = (6R)-5,10-methenyltetrahydrofolate + NADPH. The enzyme catalyses (6R)-5,10-methenyltetrahydrofolate + H2O = (6R)-10-formyltetrahydrofolate + H(+). The protein operates within one-carbon metabolism; tetrahydrofolate interconversion. Catalyzes the oxidation of 5,10-methylenetetrahydrofolate to 5,10-methenyltetrahydrofolate and then the hydrolysis of 5,10-methenyltetrahydrofolate to 10-formyltetrahydrofolate. In Listeria monocytogenes serotype 4b (strain F2365), this protein is Bifunctional protein FolD.